Consider the following 281-residue polypeptide: 2-dehydro-3-deoxyphosphooctonate aldolase (281 aa).

This sequence belongs to the KdsA family.

It localises to the cytoplasm. It carries out the reaction D-arabinose 5-phosphate + phosphoenolpyruvate + H2O = 3-deoxy-alpha-D-manno-2-octulosonate-8-phosphate + phosphate. It participates in carbohydrate biosynthesis; 3-deoxy-D-manno-octulosonate biosynthesis; 3-deoxy-D-manno-octulosonate from D-ribulose 5-phosphate: step 2/3. Its pathway is bacterial outer membrane biogenesis; lipopolysaccharide biosynthesis. This chain is 2-dehydro-3-deoxyphosphooctonate aldolase, found in Pseudomonas syringae pv. syringae (strain B728a).